Consider the following 194-residue polypeptide: Small ribosomal subunit protein eS7 (194 aa).

Belongs to the eukaryotic ribosomal protein eS7 family.

This is Small ribosomal subunit protein eS7 (RpS7) from Drosophila melanogaster (Fruit fly).